A 245-amino-acid polypeptide reads, in one-letter code: Probable phosphatase YcdX (245 aa).

Residues H7, H9, H15, H40, E73, H101, H131, D192, and H194 each coordinate Zn(2+).

The protein belongs to the PHP family. Homotrimer. Requires Zn(2+) as cofactor.

The protein is Probable phosphatase YcdX of Salmonella arizonae (strain ATCC BAA-731 / CDC346-86 / RSK2980).